The chain runs to 135 residues: MPPNLTGYYRFVSQKNLEDYLQALNVNMALRKIALLLKPDKEIDQRGNHMTVKTLSTFRNYVLEFEVGVEFEEDLRTVDGRKCQTIVTWEEEQLVCVQKGEVPNRGWRLWLEEEMLYQEVTARDAVCQCVFRKVK.

The protein belongs to the calycin superfamily. Fatty-acid binding protein (FABP) family. In terms of tissue distribution, kidney.

Its subcellular location is the cytoplasm. Functionally, intracellular transport of retinol. The protein is Retinol-binding protein 5 (RBP5) of Bos taurus (Bovine).